A 372-amino-acid polypeptide reads, in one-letter code: Uroporphyrinogen decarboxylase (372 aa).

Substrate is bound by residues 35 to 39, aspartate 85, tyrosine 166, serine 221, and histidine 342; that span reads RQAGR.

It belongs to the uroporphyrinogen decarboxylase family. In terms of assembly, homodimer.

The protein resides in the cytoplasm. It catalyses the reaction uroporphyrinogen III + 4 H(+) = coproporphyrinogen III + 4 CO2. The protein operates within porphyrin-containing compound metabolism; protoporphyrin-IX biosynthesis; coproporphyrinogen-III from 5-aminolevulinate: step 4/4. In terms of biological role, catalyzes the decarboxylation of four acetate groups of uroporphyrinogen-III to yield coproporphyrinogen-III. In Methylibium petroleiphilum (strain ATCC BAA-1232 / LMG 22953 / PM1), this protein is Uroporphyrinogen decarboxylase.